Consider the following 1132-residue polypeptide: Mis18-binding protein 1 (1132 aa).

A Glycyl lysine isopeptide (Lys-Gly) (interchain with G-Cter in SUMO2) cross-link involves residue Lys-7. Phosphoserine is present on Ser-9. Lys-65 participates in a covalent cross-link: Glycyl lysine isopeptide (Lys-Gly) (interchain with G-Cter in SUMO2). Phosphoserine occurs at positions 110, 131, 135, 172, and 192. The segment at 123–154 (LRDKQEQPSRNSSLLEPQKSGNNETFTPNRVE) is disordered. Residues 130–150 (PSRNSSLLEPQKSGNNETFTP) show a composition bias toward polar residues. Residues Lys-211 and Lys-262 each participate in a glycyl lysine isopeptide (Lys-Gly) (interchain with G-Cter in SUMO2) cross-link. The residue at position 299 (Ser-299) is a Phosphoserine. A disordered region spans residues 306 to 332 (SERTTEGTSQQKVKEGNGKTVPGETGL). Ser-365 carries the post-translational modification Phosphoserine. The SANTA domain maps to 383 to 469 (VQLQEWMIKS…MFGFPENWKE (87 aa)). Residues 482–518 (EKNREKTKQKQKTGRSVRDIRKSMKNDARENQTDTAQ) are disordered. The segment covering 497–513 (SVRDIRKSMKNDARENQ) has biased composition (basic and acidic residues). Glycyl lysine isopeptide (Lys-Gly) (interchain with G-Cter in SUMO2) cross-links involve residues Lys-534, Lys-612, Lys-639, and Lys-647. The residue at position 653 (Thr-653) is a Phosphothreonine. Glycyl lysine isopeptide (Lys-Gly) (interchain with G-Cter in SUMO2) cross-links involve residues Lys-727 and Lys-742. The interval 765-798 (HQSSPDLSSEESETEKEIKRKAEVKKTKAGNTKE) is disordered. Ser-772 and Ser-773 each carry phosphoserine. Residues 779–790 (EKEIKRKAEVKK) are compositionally biased toward basic and acidic residues. The residue at position 821 (Thr-821) is a Phosphothreonine. Position 824 is a phosphoserine (Ser-824). Lys-840 is covalently cross-linked (Glycyl lysine isopeptide (Lys-Gly) (interchain with G-Cter in SUMO2)). Phosphoserine is present on Ser-860. In terms of domain architecture, SANT spans 875 to 930 (IQDKEWNEKELQKLHCAFASLPKHKPGFWSEVAAAVGSRSPEECQRKYMENPRGKG). Residue Lys-899 forms a Glycyl lysine isopeptide (Lys-Gly) (interchain with G-Cter in SUMO2) linkage. The disordered stretch occupies residues 923–957 (MENPRGKGSQKHVTKKKPANSKGQNGKRGDADQKQ). Positions 930 to 941 (GSQKHVTKKKPA) are enriched in basic residues. Glycyl lysine isopeptide (Lys-Gly) (interchain with G-Cter in SUMO2) cross-links involve residues Lys-956, Lys-964, and Lys-983. Residue Ser-1008 is modified to Phosphoserine. Lys-1079 participates in a covalent cross-link: Glycyl lysine isopeptide (Lys-Gly) (interchain with G-Cter in SUMO2). Residue Ser-1086 is modified to Phosphoserine. 2 positions are modified to phosphothreonine: Thr-1087 and Thr-1089. 2 positions are modified to phosphoserine: Ser-1104 and Ser-1116.

In terms of assembly, interacts with SP1. Interacts with MIS18A. Identified in a complex containing MIS18A, OIP5/MIS18B, MIS18BP1, RBBP7 and RBBP4. Interacts with KAT7/HBO1. Interacts (via N-terminus) with FLNA (via N-terminus).

The protein resides in the nucleus. It localises to the chromosome. The protein localises to the centromere. Required for recruitment of CENPA to centromeres and normal chromosome segregation during mitosis. The sequence is that of Mis18-binding protein 1 (MIS18BP1) from Homo sapiens (Human).